The primary structure comprises 385 residues: Glucans biosynthesis protein C (385 aa).

A run of 10 helical transmembrane segments spans residues 17 to 37 (AWLM…SHTW), 60 to 80 (MQVF…RYPL), 91 to 111 (VGIP…IMLQ), 137 to 157 (ISHL…VWIF), 173 to 193 (KFSM…YAVI), 212 to 232 (FIVM…LAFI), 245 to 262 (RGST…LLNQ), 274 to 294 (TESV…FSFG), 311 to 331 (ASLF…AYIT), and 338 to 358 (WLGF…LYEI).

Belongs to the acyltransferase 3 family. OpgC subfamily.

The protein localises to the cell membrane. It functions in the pathway glycan metabolism; osmoregulated periplasmic glucan (OPG) biosynthesis. In terms of biological role, necessary for the succinyl substitution of periplasmic glucans. Could catalyze the transfer of succinyl residues from the cytoplasmic side of the membrane to the nascent glucan backbones on the periplasmic side of the membrane. The polypeptide is Glucans biosynthesis protein C (Escherichia coli O81 (strain ED1a)).